The following is a 2383-amino-acid chain: Reducing polyketide synthase rdc5 (2383 aa).

A Ketosynthase family 3 (KS3) domain is found at 10–438 (RAPIAIIGMS…GTNAHLVLER (429 aa)). Catalysis depends on for beta-ketoacyl synthase activity residues cysteine 186, histidine 321, and histidine 361. A malonyl-CoA:ACP transacylase (MAT) domain region spans residues 550 to 881 (FVFTGQGAQW…GFAAELFRRG (332 aa)). The tract at residues 930–1066 (KSLIGAERPS…GLFSINYEDS (137 aa)) is N-terminal hotdog fold. The PKS/mFAS DH domain maps to 930–1253 (KSLIGAERPS…LAELEVEDAD (324 aa)). Residues 932–1250 (LIGAERPSLD…DFHLAELEVE (319 aa)) are dehydratase (DH) domain. Histidine 962 serves as the catalytic Proton acceptor; for dehydratase activity. Residues 1094 to 1253 (VEVISKQAFY…LAELEVEDAD (160 aa)) form a C-terminal hotdog fold region. Aspartate 1160 acts as the Proton donor; for dehydratase activity in catalysis. An enoyl reductase (ER) domain region spans residues 1663 to 1977 (GLLNTLHFVS…QGKHVGKMIL (315 aa)). Cysteine 1776 serves as the catalytic Phosphocysteine intermediate. Residues 2002–2182 (ATYLFIGGLG…VSVNLGIMRD (181 aa)) form a ketoreductase (KR) domain region. The region spanning 2300 to 2377 (AAGPIITKAL…QFAVQIAKKS (78 aa)) is the Carrier domain. Serine 2337 is modified (O-(pantetheine 4'-phosphoryl)serine).

Its pathway is secondary metabolite biosynthesis. In terms of biological role, reducing polyketide synthase; part of the gene cluster that mediates the biosynthesis of radicicol, a resorcylic acid lactone (RAL) that irreversibly inhibits the HSP90 molecular chaperone, an important target for cancer chemotherapy. The radicicol cluster encodes only two apparent post-PKS enzymes, a cytochrome P450 monooxygenase (rdc4) and a non-heme halogenase (rdc2) that could introduce the epoxide and the chlorine, respectively. If this cluster includes all the genes required for radicicol biosynthesis, the remaining structural features of radicicol are presumably generated by the PKSs rdc1 and rdc5. The C-2' ketone could arise if the R-PKS rdc5 and NR-PKS rdc1 each carry out four iterations, in contrast to the five iteration-three iteration split for the hypothemycin PKSs. The origin of the cis 5',6' double bond is not known. The radicicol R-PKS rdc5 ER domain may catalyze either double bond isomerization or reduction in the third iteration. The sequence is that of Reducing polyketide synthase rdc5 from Metacordyceps chlamydosporia (Nematophagous fungus).